A 282-amino-acid polypeptide reads, in one-letter code: Heat stress transcription factor A-7b (282 aa).

Low complexity-rich tracts occupy residues 1–11 and 120–134; these read MDPSSSSRARS and SSSS…QSQP. Disordered stretches follow at residues 1–24 and 117–139; these read MDPS…LQEA and RRTS…AHDP. A DNA-binding region spans residues 26 to 120; it reads PSPFLTKTFE…LLKSIKRRTS (95 aa). Residues 137–196 form a hydrophobic repeat HR-A/B region; sequence HDPGVELPQLREERHVLMMEISTLRQEEQRARGYVQAMEQRINGAEKKQRHMMSFLRRAV. The short motif at 208–212 is the Nuclear localization signal element; it reads QKRDR. The short motif at 232 to 240 is the Nuclear export signal element; the sequence is LSELEALAL. An AHA motif is present at residues 259–268; that stretch reads DGFWEELLMN.

Belongs to the HSF family. Class A subfamily. As to quaternary structure, homotrimer. Post-translationally, exhibits temperature-dependent phosphorylation.

Its subcellular location is the cytoplasm. It localises to the nucleus. In terms of biological role, transcriptional activator that specifically binds DNA sequence 5'-AGAAnnTTCT-3' known as heat shock promoter elements (HSE). The polypeptide is Heat stress transcription factor A-7b (HSFA7B) (Arabidopsis thaliana (Mouse-ear cress)).